The following is an 83-amino-acid chain: Mu-theraphotoxin-Hhn2b 1 (83 aa).

The signal sequence occupies residues 1–21 (MKASMFLALAGLVLLFVVCYA). The propeptide occupies 22–48 (SESEEKEFPRELISKIFAVDDFKGEER). 3 disulfides stabilise this stretch: Cys-50-Cys-65, Cys-57-Cys-70, and Cys-64-Cys-77. Position 81 is a leucine amide (Leu-81).

This sequence belongs to the neurotoxin 10 (Hwtx-1) family. 14 (Hntx-1) subfamily. Monomer. As to expression, expressed by the venom gland.

The protein resides in the secreted. Its function is as follows. Weakly blocks the rat SCN2A/SCN1B (Nav1.2/beta-1) sodium channel (IC(50)=68 uM) and the insect sodium channel para/tipE (IC(50)=4.3 uM), without altering the activation or inactivation kinetics (depressant toxin). This chain is Mu-theraphotoxin-Hhn2b 1, found in Cyriopagopus hainanus (Chinese bird spider).